The following is a 198-amino-acid chain: HTH-type transcriptional regulator BetI (198 aa).

Residues 8–68 (PLRRRELIDA…ATMRHLLREL (61 aa)) form the HTH tetR-type domain. The segment at residues 31-50 (TVAQIAHEAGVSPALAHHYF) is a DNA-binding region (H-T-H motif).

The protein operates within amine and polyamine biosynthesis; betaine biosynthesis via choline pathway [regulation]. Functionally, repressor involved in the biosynthesis of the osmoprotectant glycine betaine. It represses transcription of the choline transporter BetT and the genes of BetAB involved in the synthesis of glycine betaine. This Brucella suis (strain ATCC 23445 / NCTC 10510) protein is HTH-type transcriptional regulator BetI.